Reading from the N-terminus, the 332-residue chain is Glycerol-3-phosphate dehydrogenase [NAD(P)+] (332 aa).

Residues Trp11, Arg30, and Lys108 each contribute to the NADPH site. The sn-glycerol 3-phosphate site is built by Lys108, Gly137, and Ser139. Ala141 contacts NADPH. Positions 192, 245, 255, 256, and 257 each coordinate sn-glycerol 3-phosphate. The active-site Proton acceptor is Lys192. Position 256 (Arg256) interacts with NADPH. NADPH contacts are provided by Val280 and Glu282.

The protein belongs to the NAD-dependent glycerol-3-phosphate dehydrogenase family.

It localises to the cytoplasm. It carries out the reaction sn-glycerol 3-phosphate + NAD(+) = dihydroxyacetone phosphate + NADH + H(+). The catalysed reaction is sn-glycerol 3-phosphate + NADP(+) = dihydroxyacetone phosphate + NADPH + H(+). It participates in membrane lipid metabolism; glycerophospholipid metabolism. In terms of biological role, catalyzes the reduction of the glycolytic intermediate dihydroxyacetone phosphate (DHAP) to sn-glycerol 3-phosphate (G3P), the key precursor for phospholipid synthesis. The chain is Glycerol-3-phosphate dehydrogenase [NAD(P)+] from Burkholderia orbicola (strain AU 1054).